A 295-amino-acid polypeptide reads, in one-letter code: G1/S-specific cyclin-D1 (295 aa).

The Cyclin N-terminal domain maps to 28–152; it reads LRAMLKAEET…LLVNKLKWNL (125 aa). The tract at residues 262–295 is disordered; sequence AQQNMDPKAAEEEEEEEEEVDLACTPTDVRDVDI. K269 is covalently cross-linked (Glycyl lysine isopeptide (Lys-Gly) (interchain with G-Cter in ubiquitin)). Residues 272-282 are compositionally biased toward acidic residues; the sequence is EEEEEEEEEVD. The residue at position 286 (T286) is a Phosphothreonine.

Belongs to the cyclin family. Cyclin D subfamily. In terms of assembly, interacts with either CDK4 or CDK6 protein kinase to form a serine/threonine kinase holoenzyme complex. The cyclin subunit imparts substrate specificity to the complex. Component of the ternary complex CCND1/CDK4/CDKN1B required for nuclear translocation and modulation of CDK4-mediated kinase activity. Interacts directly with CDKN1B. Can form similar complexes with either CDKN1A or CDKN2A. Interacts with UHRF2; the interaction ubiquitinates CCND1 and appears to occur independently of phosphorylation. Interacts with USP2. Interacts (via cyclin N-terminal domain) with INSM1 (via N-terminal region); the interaction competes with the binding of CCND1 to CDK4 during cell cycle progression and inhibits CDK4 activity. Interacts with CDK4; the interaction is prevented with the binding of CCND1 to INSM1 during cell cycle progression. In terms of processing, phosphorylation at Thr-286 by MAP kinases is required for ubiquitination and degradation by the DCX(AMBRA1) complex. It also plays an essential role for recognition by the FBXO31 component of SCF (SKP1-cullin-F-box) protein ligase complex following DNA damage. Post-translationally, ubiquitinated at Lys-269 by the DCX(AMBRA1) complex during the transition from G1 to S cell phase, leading to its degradation: ubiquitination is dependent on Thr-286 phosphorylation. The DCX(AMBRA1) complex represents the major regulator of CCND1 stability during the G1/S transition. Also ubiquitinated by the SCF(FBXO4) and Cul7-RING(FBXW8) ubiquitin-protein ligase complexes. Following DNA damage it is ubiquitinated by the SCF(FBXO31) protein ligase complex. SCF(FBXO31) ubiquitination is dependent on Thr-286 phosphorylation. Ubiquitinated also by UHRF2 apparently in a phosphorylation-independent manner. Ubiquitination leads to its degradation and G1 arrest. Deubiquitinated by USP2; leading to its stabilization.

The protein resides in the nucleus. It is found in the cytoplasm. Its subcellular location is the nucleus membrane. Regulatory component of the cyclin D1-CDK4 (DC) complex that phosphorylates and inhibits members of the retinoblastoma (RB) protein family including RB1 and regulates the cell-cycle during G(1)/S transition. Phosphorylation of RB1 allows dissociation of the transcription factor E2F from the RB/E2F complex and the subsequent transcription of E2F target genes which are responsible for the progression through the G(1) phase. Hypophosphorylates RB1 in early G(1) phase. Cyclin D-CDK4 complexes are major integrators of various mitogenenic and antimitogenic signals. Also a substrate for SMAD3, phosphorylating SMAD3 in a cell-cycle-dependent manner and repressing its transcriptional activity. Component of the ternary complex, cyclin D1/CDK4/CDKN1B, required for nuclear translocation and activity of the cyclin D-CDK4 complex. Exhibits transcriptional corepressor activity with INSM1 on the NEUROD1 and INS promoters in a cell cycle-independent manner. This is G1/S-specific cyclin-D1 (CCND1) from Pongo abelii (Sumatran orangutan).